Here is a 774-residue protein sequence, read N- to C-terminus: Phosphoribosylformylglycinamidine synthase subunit PurL (774 aa).

The active site involves H51. Positions 54 and 93 each coordinate ATP. E95 contributes to the Mg(2+) binding site. Residues 96–99 (SHNH) and R118 each bind substrate. Catalysis depends on H97, which acts as the Proton acceptor. D119 contacts Mg(2+). Q242 contacts substrate. D270 provides a ligand contact to Mg(2+). 314-316 (ESQ) serves as a coordination point for substrate. 2 residues coordinate ATP: D514 and G551. A Mg(2+)-binding site is contributed by N552. Substrate is bound at residue S554.

It belongs to the FGAMS family. As to quaternary structure, monomer. Part of the FGAM synthase complex composed of 1 PurL, 1 PurQ and 2 PurS subunits.

Its subcellular location is the cytoplasm. It carries out the reaction N(2)-formyl-N(1)-(5-phospho-beta-D-ribosyl)glycinamide + L-glutamine + ATP + H2O = 2-formamido-N(1)-(5-O-phospho-beta-D-ribosyl)acetamidine + L-glutamate + ADP + phosphate + H(+). It participates in purine metabolism; IMP biosynthesis via de novo pathway; 5-amino-1-(5-phospho-D-ribosyl)imidazole from N(2)-formyl-N(1)-(5-phospho-D-ribosyl)glycinamide: step 1/2. Part of the phosphoribosylformylglycinamidine synthase complex involved in the purines biosynthetic pathway. Catalyzes the ATP-dependent conversion of formylglycinamide ribonucleotide (FGAR) and glutamine to yield formylglycinamidine ribonucleotide (FGAM) and glutamate. The FGAM synthase complex is composed of three subunits. PurQ produces an ammonia molecule by converting glutamine to glutamate. PurL transfers the ammonia molecule to FGAR to form FGAM in an ATP-dependent manner. PurS interacts with PurQ and PurL and is thought to assist in the transfer of the ammonia molecule from PurQ to PurL. This chain is Phosphoribosylformylglycinamidine synthase subunit PurL, found in Gloeobacter violaceus (strain ATCC 29082 / PCC 7421).